A 202-amino-acid polypeptide reads, in one-letter code: tRNA (pseudouridine(54)-N(1))-methyltransferase (202 aa).

S-adenosyl-L-methionine is bound by residues Leu134 and Gly155.

It belongs to the methyltransferase superfamily. TrmY family. In terms of assembly, homodimer.

The protein localises to the cytoplasm. It catalyses the reaction pseudouridine(54) in tRNA + S-adenosyl-L-methionine = N(1)-methylpseudouridine(54) in tRNA + S-adenosyl-L-homocysteine + H(+). Specifically catalyzes the N1-methylation of pseudouridine at position 54 (Psi54) in tRNAs. In Thermococcus gammatolerans (strain DSM 15229 / JCM 11827 / EJ3), this protein is tRNA (pseudouridine(54)-N(1))-methyltransferase.